Consider the following 436-residue polypeptide: Transcriptional regulator STP3 (436 aa).

The disordered stretch occupies residues 204-277; it reads EPLDDEFVPP…TKRKYTKKKQ (74 aa). Low complexity predominate over residues 230 to 265; that stretch reads ISPPASSDSSSSSSYVPQLIPSSSSSVTSNGDSPVS. A compositionally biased stretch (basic residues) spans 268–277; the sequence is TKRKYTKKKQ. A C2H2-type zinc finger spans residues 315 to 337; that stretch reads FDCPSCDASFKVKGYLTRHLKKH.

Activated by the amino acid-induced proteolytic removal of an N-terminal inhibitory domain.

It is found in the cell membrane. The protein resides in the nucleus. Its function is as follows. Transcription factor that activates genes required for degradation of extracellular protein and uptake of peptides such as the secreted aspartyl protease SAP2 or the oligopeptide transporter OPT1. Required for virulence. Synthesized as latent cytoplasmic precursor, which, upon a signal initiated by the plasma membrane SPS amino acid sensor system (including CSY1 and CSH3), becomes proteolytically activated and relocates to the nucleus, where it induces the expression of SPS-sensor-regulated genes. This Candida albicans (strain SC5314 / ATCC MYA-2876) (Yeast) protein is Transcriptional regulator STP3 (STP3).